The sequence spans 698 residues: Polyribonucleotide nucleotidyltransferase (698 aa).

Mg(2+) is bound by residues aspartate 486 and aspartate 492. A KH domain is found at 553–612 (PRIIVRNIPKDRIGELIGPGGKNVRGISELTGAELYIEDDGKVTISGSNQESAEKAAKMV). Residues 622–690 (GKIYEGKVKR…KTGKIDLSRK (69 aa)) enclose the S1 motif domain.

Belongs to the polyribonucleotide nucleotidyltransferase family. Mg(2+) is required as a cofactor.

The protein resides in the cytoplasm. It catalyses the reaction RNA(n+1) + phosphate = RNA(n) + a ribonucleoside 5'-diphosphate. Involved in mRNA degradation. Catalyzes the phosphorolysis of single-stranded polyribonucleotides processively in the 3'- to 5'-direction. The polypeptide is Polyribonucleotide nucleotidyltransferase (Leptospira interrogans serogroup Icterohaemorrhagiae serovar copenhageni (strain Fiocruz L1-130)).